The chain runs to 156 residues: MPRRRVIGQRKILPDPKFGSELLAKFVNILMVDGKKSTAESIVYNALETLAQRSGKTELEAFEIALDNVRPTVEVKSRRVGGSTYQVPVEVRPVRRNALAMRWIVEAARKRGDKSMALRLANELSDAAENKGAAVKKREDVHRMADANKAFAHYRW.

It belongs to the universal ribosomal protein uS7 family. In terms of assembly, part of the 30S ribosomal subunit. Contacts proteins S9 and S11.

One of the primary rRNA binding proteins, it binds directly to 16S rRNA where it nucleates assembly of the head domain of the 30S subunit. Is located at the subunit interface close to the decoding center, probably blocks exit of the E-site tRNA. In Proteus mirabilis (strain HI4320), this protein is Small ribosomal subunit protein uS7.